The following is a 185-amino-acid chain: Acireductone dioxygenase (185 aa).

Fe(2+)-binding residues include histidine 97, histidine 99, glutamate 103, and histidine 141. Residues histidine 97, histidine 99, glutamate 103, and histidine 141 each contribute to the Ni(2+) site.

It belongs to the acireductone dioxygenase (ARD) family. In terms of assembly, monomer. It depends on Fe(2+) as a cofactor. Ni(2+) serves as cofactor.

The enzyme catalyses 1,2-dihydroxy-5-(methylsulfanyl)pent-1-en-3-one + O2 = 3-(methylsulfanyl)propanoate + CO + formate + 2 H(+). The catalysed reaction is 1,2-dihydroxy-5-(methylsulfanyl)pent-1-en-3-one + O2 = 4-methylsulfanyl-2-oxobutanoate + formate + 2 H(+). It functions in the pathway amino-acid biosynthesis; L-methionine biosynthesis via salvage pathway; L-methionine from S-methyl-5-thio-alpha-D-ribose 1-phosphate: step 5/6. Functionally, catalyzes 2 different reactions between oxygen and the acireductone 1,2-dihydroxy-3-keto-5-methylthiopentene (DHK-MTPene) depending upon the metal bound in the active site. Fe-containing acireductone dioxygenase (Fe-ARD) produces formate and 2-keto-4-methylthiobutyrate (KMTB), the alpha-ketoacid precursor of methionine in the methionine recycle pathway. Ni-containing acireductone dioxygenase (Ni-ARD) produces methylthiopropionate, carbon monoxide and formate, and does not lie on the methionine recycle pathway. In Stenotrophomonas maltophilia (strain R551-3), this protein is Acireductone dioxygenase.